Here is a 1110-residue protein sequence, read N- to C-terminus: Nitric oxide synthase 3 (1110 aa).

The tract at residues 1–74 (MGNFKSVGQE…PPEGPKFPRV (74 aa)) is disordered. A compositionally biased stretch (gly residues) spans 15-27 (CGLGLGLGLGLCG). Residues 31–40 (PASPAPVSAS) show a composition bias toward low complexity. Pro residues predominate over residues 47-69 (SSPPLPLPAPEHSPPLTRPPEGP). Zn(2+)-binding residues include cysteine 97 and cysteine 102. The tract at residues 101 to 489 (RCLGSLVFPR…PDPWKGSGTK (389 aa)) is interaction with NOSIP. Serine 105 contributes to the (6R)-L-erythro-5,6,7,8-tetrahydrobiopterin binding site. At serine 117 the chain carries Phosphoserine. Cysteine 187 is a heme b binding site. L-arginine is bound by residues glutamine 250, tryptophan 359, tyrosine 360, and glutamate 364. Residue arginine 368 participates in (6R)-L-erythro-5,6,7,8-tetrahydrobiopterin binding. Asparagine 369 lines the L-arginine pocket. Residues alanine 449, tryptophan 450, and phenylalanine 463 each contribute to the (6R)-L-erythro-5,6,7,8-tetrahydrobiopterin site. Tyrosine 478 is a heme b binding site. Residue threonine 498 is modified to Phosphothreonine. 6 residues coordinate FMN: serine 529, glutamate 530, threonine 531, arginine 533, serine 575, and threonine 576. Phosphoserine is present on residues serine 618, serine 636, and serine 641. FMN is bound by residues serine 657, cysteine 664, glutamate 690, and glutamine 694. Arginine 779 is a binding site for NADP(+). Histidine 801 contributes to the FAD binding site. A disordered region spans residues 821 to 848 (EDPPPPAESVAVEQLEKGSPGGPPPGWV). The residue at position 839 (serine 839) is a Phosphoserine. Residues arginine 941, tyrosine 943, serine 944, threonine 959, alanine 961, tyrosine 965, valine 978, cysteine 979, and serine 980 each coordinate FAD. 5 residues coordinate NADP(+): threonine 1019, arginine 1052, serine 1081, arginine 1082, and lysine 1088.

This sequence belongs to the NOS family. As to quaternary structure, homodimer. Interacts with NOSIP and NOSTRIN. Interacts with HSP90AB1. Forms a complex with ASL, ASS1 and SLC7A1; the complex regulates cell-autonomous L-arginine synthesis and citrulline recycling while channeling extracellular L-arginine to nitric oxide synthesis pathway. It depends on heme b as a cofactor. The cofactor is FAD. FMN serves as cofactor. (6R)-L-erythro-5,6,7,8-tetrahydrobiopterin is required as a cofactor.

The protein localises to the membrane. The protein resides in the caveola. Its subcellular location is the cytoplasm. It localises to the cytoskeleton. It is found in the golgi apparatus. The protein localises to the cell membrane. The enzyme catalyses 2 L-arginine + 3 NADPH + 4 O2 + H(+) = 2 L-citrulline + 2 nitric oxide + 3 NADP(+) + 4 H2O. Stimulated by calcium/calmodulin. Inhibited by NOSIP and NOSTRIN. Its function is as follows. Produces nitric oxide (NO) which is implicated in vascular smooth muscle relaxation through a cGMP-mediated signal transduction pathway. NO mediates vascular endothelial growth factor (VEGF)-induced angiogenesis in coronary vessels and promotes blood clotting through the activation of platelets. In Cavia porcellus (Guinea pig), this protein is Nitric oxide synthase 3 (NOS3).